The following is a 775-amino-acid chain: Thiamine repressible genes regulatory protein thi1 (775 aa).

Positions 39–65 (CKHCRQKKIKCNGGQPCISCKTLNIEC) form a DNA-binding region, zn(2)-C6 fungal-type. Serine 208 is subject to Phosphoserine. Disordered stretches follow at residues 676-695 (LTGE…FQPF) and 754-775 (NVSE…EKNG).

It localises to the nucleus. Transcription factor that activates the nmt1 promoter. Regulation of thiamine repressible genes. Positively regulates conjugation during meiosis. In Schizosaccharomyces pombe (strain 972 / ATCC 24843) (Fission yeast), this protein is Thiamine repressible genes regulatory protein thi1 (thi1).